Consider the following 496-residue polypeptide: Lysine--tRNA ligase (496 aa).

2 residues coordinate Mg(2+): E407 and E414.

It belongs to the class-II aminoacyl-tRNA synthetase family. As to quaternary structure, homodimer. It depends on Mg(2+) as a cofactor.

It localises to the cytoplasm. It catalyses the reaction tRNA(Lys) + L-lysine + ATP = L-lysyl-tRNA(Lys) + AMP + diphosphate. This is Lysine--tRNA ligase from Staphylococcus haemolyticus (strain JCSC1435).